The sequence spans 432 residues: Glutamyl-tRNA reductase (432 aa).

Residues 49 to 52 (TCNR), Ser-107, 112 to 114 (ETQ), and Gln-118 each bind substrate. Cys-50 serves as the catalytic Nucleophile. Position 186–191 (186–191 (GAGEMG)) interacts with NADP(+).

Belongs to the glutamyl-tRNA reductase family. In terms of assembly, homodimer.

The catalysed reaction is (S)-4-amino-5-oxopentanoate + tRNA(Glu) + NADP(+) = L-glutamyl-tRNA(Glu) + NADPH + H(+). Its pathway is porphyrin-containing compound metabolism; protoporphyrin-IX biosynthesis; 5-aminolevulinate from L-glutamyl-tRNA(Glu): step 1/2. In terms of biological role, catalyzes the NADPH-dependent reduction of glutamyl-tRNA(Glu) to glutamate 1-semialdehyde (GSA). This chain is Glutamyl-tRNA reductase, found in Campylobacter jejuni subsp. doylei (strain ATCC BAA-1458 / RM4099 / 269.97).